A 184-amino-acid chain; its full sequence is Glucosamine 6-phosphate N-acetyltransferase (184 aa).

The N-acetyltransferase domain maps to 39–184; the sequence is LVLRPLCTAD…ENYMCRRFLK (146 aa). Substrate-binding positions include T61, 108-111, and 120-122; these read KFIH and EDV. 130–135 serves as a coordination point for acetyl-CoA; it reads GKQLGK. 151–152 is a binding site for substrate; it reads YK. 165 to 167 lines the acetyl-CoA pocket; sequence YKK. The substrate site is built by E175 and R181.

It belongs to the acetyltransferase family. GNA1 subfamily. As to quaternary structure, homodimer. Ubiquitous. Shows a strong differential expression pattern in adult hematopoietic precursor cells.

Its subcellular location is the golgi apparatus membrane. The protein localises to the endosome membrane. It carries out the reaction D-glucosamine 6-phosphate + acetyl-CoA = N-acetyl-D-glucosamine 6-phosphate + CoA + H(+). Its pathway is nucleotide-sugar biosynthesis; UDP-N-acetyl-alpha-D-glucosamine biosynthesis; N-acetyl-alpha-D-glucosamine 1-phosphate from alpha-D-glucosamine 6-phosphate (route I): step 1/2. This chain is Glucosamine 6-phosphate N-acetyltransferase (Gnpnat1), found in Mus musculus (Mouse).